A 339-amino-acid polypeptide reads, in one-letter code: tRNA dimethylallyltransferase (339 aa).

Residue 36–43 (GPTGSGKT) coordinates ATP. Residue 38–43 (TGSGKT) coordinates substrate. The interval 61 to 64 (DSMQ) is interaction with substrate tRNA.

Belongs to the IPP transferase family. As to quaternary structure, monomer. It depends on Mg(2+) as a cofactor.

It catalyses the reaction adenosine(37) in tRNA + dimethylallyl diphosphate = N(6)-dimethylallyladenosine(37) in tRNA + diphosphate. Catalyzes the transfer of a dimethylallyl group onto the adenine at position 37 in tRNAs that read codons beginning with uridine, leading to the formation of N6-(dimethylallyl)adenosine (i(6)A). The chain is tRNA dimethylallyltransferase from Chlamydia trachomatis serovar L2 (strain ATCC VR-902B / DSM 19102 / 434/Bu).